The chain runs to 156 residues: Ribosome-binding factor A (156 aa).

The tract at residues 129–156 (AGEAQPYRVEEEPGDSEDETPPSSQDQR) is disordered.

The protein belongs to the RbfA family. In terms of assembly, monomer. Binds 30S ribosomal subunits, but not 50S ribosomal subunits or 70S ribosomes.

The protein localises to the cytoplasm. Functionally, one of several proteins that assist in the late maturation steps of the functional core of the 30S ribosomal subunit. Associates with free 30S ribosomal subunits (but not with 30S subunits that are part of 70S ribosomes or polysomes). Required for efficient processing of 16S rRNA. May interact with the 5'-terminal helix region of 16S rRNA. The polypeptide is Ribosome-binding factor A (Salinispora arenicola (strain CNS-205)).